A 157-amino-acid polypeptide reads, in one-letter code: uncharacterized protein (157 aa).

The 139-residue stretch at 9-147 (LLINYKTLDE…DFYVWHPEVN (139 aa)) folds into the N-acetyltransferase domain.

This is an uncharacterized protein from Bacillus cereus (strain 03BB102).